We begin with the raw amino-acid sequence, 354 residues long: Guanine nucleotide-binding protein alpha-3 subunit (354 aa).

A lipid anchor (N-myristoyl glycine) is attached at Gly2. Residue Cys4 is the site of S-palmitoyl cysteine attachment. The G-alpha domain maps to 33 to 354 (KECKILLLGS…TNALKDSGIL (322 aa)). A G1 motif region spans residues 36-49 (KILLLGSGESGKST). GTP contacts are provided by residues 41 to 48 (GSGESGKS), 177 to 183 (LRARSKT), 202 to 206 (DVGGQ), 271 to 274 (NKID), and Ala326. Mg(2+)-binding residues include Ser48 and Thr183. Positions 175 to 183 (DVLRARSKT) are G2 motif. Positions 198 to 207 (IHLFDVGGQR) are G3 motif. A G4 motif region spans residues 267 to 274 (ILFLNKID). The tract at residues 324–329 (TQATDT) is G5 motif.

This sequence belongs to the G-alpha family. In terms of assembly, g proteins are composed of 3 units; alpha, beta and gamma. The alpha chain contains the guanine nucleotide binding site.

Its function is as follows. Guanine nucleotide-binding proteins (G proteins) are involved as modulators or transducers in various transmembrane signaling systems. GPA3 plays an active role in transmission of the pheromone signal. The sequence is that of Guanine nucleotide-binding protein alpha-3 subunit (GPA3) from Mycosarcoma maydis (Corn smut fungus).